An 83-amino-acid polypeptide reads, in one-letter code: Toxin TdNa3 (83 aa).

Residues 1-20 (MKGMIMLISCLMLIDVVVES) form the signal peptide. The 62-residue stretch at 21–82 (KNGYIIEPKG…IFDYYNNKCG (62 aa)) folds into the LCN-type CS-alpha/beta domain. Intrachain disulfides connect Cys31–Cys81, Cys35–Cys57, Cys43–Cys62, and Cys47–Cys64. Cys81 carries the cysteine amide modification.

The protein belongs to the long (4 C-C) scorpion toxin superfamily. Sodium channel inhibitor family. Beta subfamily. Expressed by the venom gland.

It localises to the secreted. Functionally, inhibits the sodium currents (Nav) in an apparent irreversible manner. Produces small depolarization and induces repetitive firing in squid axons. Is specific for arthropods (crickets, triatomides, crabs and squids), but is non-toxic to mice. This chain is Toxin TdNa3, found in Tityus discrepans (Venezuelan scorpion).